The chain runs to 1008 residues: Pheromone-regulated membrane protein 10 (1008 aa).

3 disordered regions span residues 1 to 273 (MSQS…TFLG), 342 to 384 (KLPE…FYTP), and 477 to 506 (KNDFKNGPKRMANKIPGRKHGAQKQDTQDE). The segment covering 70 to 85 (DTIISNASTTNNSSSD) has biased composition (low complexity). Residues 95–111 (GENSNLPNFNFSANQVH) are compositionally biased toward polar residues. 2 stretches are compositionally biased toward acidic residues: residues 116–132 (ANEDDANDDSGEEEDTF) and 143–161 (GSDEDMEADNEGDNVEDKE). The segment covering 162 to 186 (EVVNEKEEIADDLHSKSSKTSRESK) has biased composition (basic and acidic residues). Polar residues predominate over residues 188 to 204 (FNAGTKNSRRSLNSLQR). Residues 205 to 214 (NETDVTDQLK) are compositionally biased toward basic and acidic residues. Low complexity predominate over residues 215-225 (RTTSTTSSSKR). Residues 226-239 (SNSDKRTGFKDILR) are compositionally biased toward basic and acidic residues. A compositionally biased stretch (polar residues) spans 346-364 (GTSSDQQLDYSDTSASNLI). Positions 483-498 (GPKRMANKIPGRKHGA) are enriched in basic residues. The next 10 membrane-spanning stretches (helical) occupy residues 683–703 (SPWLCVFLYGLGSSMVCPFAF), 707–727 (WYDVPIAFGVGLCVGYLQFFV), 736–756 (SVFEVTASIVVTFIARAIGSI), 762–782 (FCFSAIAQGSLALILPGYIIL), 800–820 (MFYAIIYSLFLGFGITLGASL), 838–858 (IKQDEFKILFVPLFSACLGLI), 866–886 (LPIMIVIACAGYVGTFFAGKH), 892–912 (VTEFTACIGAFIVGILGNLYS), 917–937 (GMAVAAMLPAIFVQVPSGIAS), and 978–998 (VKVSIGISVGLFASALFVYPF).

Belongs to the ThrE exporter (TC 2.A.79) family.

It localises to the membrane. The protein is Pheromone-regulated membrane protein 10 of Debaryomyces hansenii (strain ATCC 36239 / CBS 767 / BCRC 21394 / JCM 1990 / NBRC 0083 / IGC 2968) (Yeast).